A 179-amino-acid polypeptide reads, in one-letter code: Ribosome maturation factor RimM (179 aa).

The 80-residue stretch at 95–174 (KDEFFYFDIL…QIFCTQDAFL (80 aa)) folds into the PRC barrel domain.

This sequence belongs to the RimM family. Binds ribosomal protein uS19.

It is found in the cytoplasm. An accessory protein needed during the final step in the assembly of 30S ribosomal subunit, possibly for assembly of the head region. Essential for efficient processing of 16S rRNA. May be needed both before and after RbfA during the maturation of 16S rRNA. It has affinity for free ribosomal 30S subunits but not for 70S ribosomes. The protein is Ribosome maturation factor RimM of Campylobacter jejuni subsp. jejuni serotype O:2 (strain ATCC 700819 / NCTC 11168).